A 470-amino-acid polypeptide reads, in one-letter code: UDP-N-acetylmuramoylalanine--D-glutamate ligase (470 aa).

Residue 121 to 127 (GTNGKST) coordinates ATP.

This sequence belongs to the MurCDEF family.

It is found in the cytoplasm. The enzyme catalyses UDP-N-acetyl-alpha-D-muramoyl-L-alanine + D-glutamate + ATP = UDP-N-acetyl-alpha-D-muramoyl-L-alanyl-D-glutamate + ADP + phosphate + H(+). The protein operates within cell wall biogenesis; peptidoglycan biosynthesis. Functionally, cell wall formation. Catalyzes the addition of glutamate to the nucleotide precursor UDP-N-acetylmuramoyl-L-alanine (UMA). The polypeptide is UDP-N-acetylmuramoylalanine--D-glutamate ligase (Rhizobium johnstonii (strain DSM 114642 / LMG 32736 / 3841) (Rhizobium leguminosarum bv. viciae)).